The chain runs to 200 residues: Nucleoside triphosphate pyrophosphatase (200 aa).

Residue Asp79 is the Proton acceptor of the active site.

This sequence belongs to the Maf family. A divalent metal cation is required as a cofactor.

It is found in the cytoplasm. It catalyses the reaction a ribonucleoside 5'-triphosphate + H2O = a ribonucleoside 5'-phosphate + diphosphate + H(+). It carries out the reaction a 2'-deoxyribonucleoside 5'-triphosphate + H2O = a 2'-deoxyribonucleoside 5'-phosphate + diphosphate + H(+). Nucleoside triphosphate pyrophosphatase. May have a dual role in cell division arrest and in preventing the incorporation of modified nucleotides into cellular nucleic acids. The sequence is that of Nucleoside triphosphate pyrophosphatase from Legionella pneumophila (strain Corby).